A 111-amino-acid chain; its full sequence is Photosystem II reaction center Psb28 protein (111 aa).

The protein belongs to the Psb28 family. Part of the photosystem II complex.

The protein localises to the cellular thylakoid membrane. In Trichormus variabilis (strain ATCC 29413 / PCC 7937) (Anabaena variabilis), this protein is Photosystem II reaction center Psb28 protein.